A 514-amino-acid chain; its full sequence is 6-phosphofructo-2-kinase/fructose-2,6-bisphosphatase 3 (514 aa).

The interval 1–245 (MPLELTQSRV…VYYLMNIHVQ (245 aa)) is 6-phosphofructo-2-kinase. 42–50 (GLPARGKTY) provides a ligand contact to ATP. Arg-75 and Arg-99 together coordinate beta-D-fructose 6-phosphate. The active site involves Asp-125. Residues Thr-127 and Arg-133 each contribute to the beta-D-fructose 6-phosphate site. Cys-155 is an active-site residue. 164–169 (NIMEVK) serves as a coordination point for ATP. 3 residues coordinate beta-D-fructose 6-phosphate: Lys-169, Arg-190, and Tyr-194. Positions 246–514 (PRTIYLCRHG…QPLLGQACLT (269 aa)) are fructose-2,6-bisphosphatase. Beta-D-fructose 2,6-bisphosphate is bound at residue Arg-253. Residue His-254 is the Tele-phosphohistidine intermediate of the active site. Positions 260 and 266 each coordinate beta-D-fructose 2,6-bisphosphate. Catalysis depends on Glu-323, which acts as the Proton donor/acceptor. Beta-D-fructose 2,6-bisphosphate is bound by residues Tyr-334, Arg-348, Lys-352, Tyr-363, Gln-389, and Arg-393. Residue 345–348 (YALR) participates in ATP binding. ATP-binding positions include 389-393 (QAVLR) and Tyr-425. A disordered region spans residues 444–475 (ERSEDAKKGPNPLMRRNSVTPLASPEPTKKPR). Ser-461 carries the phosphoserine; by AMPK and PKA modification. Thr-463 carries the post-translational modification Phosphothreonine. The residue at position 467 (Ser-467) is a Phosphoserine. Phosphothreonine; by PKC is present on Thr-471.

It in the C-terminal section; belongs to the phosphoglycerate mutase family. In terms of assembly, homodimer. Forms a heterodimer with PFKFB2. In terms of processing, phosphorylation by AMPK stimulates activity.

It catalyses the reaction beta-D-fructose 2,6-bisphosphate + H2O = beta-D-fructose 6-phosphate + phosphate. The enzyme catalyses beta-D-fructose 6-phosphate + ATP = beta-D-fructose 2,6-bisphosphate + ADP + H(+). Functionally, catalyzes both the synthesis and degradation of fructose 2,6-bisphosphate. The protein is 6-phosphofructo-2-kinase/fructose-2,6-bisphosphatase 3 (PFKFB3) of Pongo abelii (Sumatran orangutan).